We begin with the raw amino-acid sequence, 250 residues long: 2,3-bisphosphoglycerate-dependent phosphoglycerate mutase (250 aa).

Residues 10-17 (RHGESQWN), 23-24 (TG), Arg-62, 89-92 (ERHY), Lys-100, 116-117 (RR), and 185-186 (GN) contribute to the substrate site. Residue His-11 is the Tele-phosphohistidine intermediate of the active site. Glu-89 serves as the catalytic Proton donor/acceptor.

It belongs to the phosphoglycerate mutase family. BPG-dependent PGAM subfamily. In terms of assembly, homodimer.

The enzyme catalyses (2R)-2-phosphoglycerate = (2R)-3-phosphoglycerate. The protein operates within carbohydrate degradation; glycolysis; pyruvate from D-glyceraldehyde 3-phosphate: step 3/5. In terms of biological role, catalyzes the interconversion of 2-phosphoglycerate and 3-phosphoglycerate. This Shigella boydii serotype 4 (strain Sb227) protein is 2,3-bisphosphoglycerate-dependent phosphoglycerate mutase.